The primary structure comprises 507 residues: ATP synthase subunit alpha, chloroplastic (507 aa).

170–177 provides a ligand contact to ATP; the sequence is GDRQTGKT.

This sequence belongs to the ATPase alpha/beta chains family. F-type ATPases have 2 components, CF(1) - the catalytic core - and CF(0) - the membrane proton channel. CF(1) has five subunits: alpha(3), beta(3), gamma(1), delta(1), epsilon(1). CF(0) has four main subunits: a, b, b' and c.

It is found in the plastid. The protein resides in the chloroplast thylakoid membrane. The enzyme catalyses ATP + H2O + 4 H(+)(in) = ADP + phosphate + 5 H(+)(out). In terms of biological role, produces ATP from ADP in the presence of a proton gradient across the membrane. The alpha chain is a regulatory subunit. In Populus alba (White poplar), this protein is ATP synthase subunit alpha, chloroplastic.